The following is a 155-amino-acid chain: MTEAAEATLSADIQLIQRIIPHRYPFLLVDRVRDIVPNQSAVGIKCVTMNEPQFTGHFPGLPIFPGVQIIEAMAQTAAVLVGVSLDLADKGAKVYFMGIDGAKFRRKVVPGDVLEMTVTVKRGGGKVWKFEGRASVDGELAAEAEFAAMLDIPKG.

Residue histidine 57 is part of the active site.

This sequence belongs to the thioester dehydratase family. FabZ subfamily.

The protein resides in the cytoplasm. The catalysed reaction is a (3R)-hydroxyacyl-[ACP] = a (2E)-enoyl-[ACP] + H2O. In terms of biological role, involved in unsaturated fatty acids biosynthesis. Catalyzes the dehydration of short chain beta-hydroxyacyl-ACPs and long chain saturated and unsaturated beta-hydroxyacyl-ACPs. In Cereibacter sphaeroides (strain ATCC 17025 / ATH 2.4.3) (Rhodobacter sphaeroides), this protein is 3-hydroxyacyl-[acyl-carrier-protein] dehydratase FabZ.